We begin with the raw amino-acid sequence, 313 residues long: uncharacterized protein (313 aa).

A run of 3 helical transmembrane segments spans residues 41 to 61, 68 to 88, and 102 to 122; these read LAGT…GLMV, VHSV…FHYF, and QLLL…KLVL.

Belongs to the cytochrome b family.

The protein resides in the mitochondrion membrane. This is an uncharacterized protein from Arabidopsis thaliana (Mouse-ear cress).